A 213-amino-acid chain; its full sequence is Na(+)-translocating NADH-quinone reductase subunit D (213 aa).

6 helical membrane-spanning segments follow: residues 22-42, 43-63, 77-97, 101-121, 131-151, and 183-203; these read LIAILGICSALAVTTTVTTAL, TMGFAVSFVTGCSSFVVSLLR, IIISLFVILIDQFLKAFFFTI, LSVFVGLIITNCIVMGRAESM, FLDGLGSGLGYGWVLVCISII, and LGLMVLAPSAFFLLGIMIWIV.

The protein belongs to the NqrDE/RnfAE family. In terms of assembly, composed of six subunits; NqrA, NqrB, NqrC, NqrD, NqrE and NqrF.

It localises to the cell inner membrane. The catalysed reaction is a ubiquinone + n Na(+)(in) + NADH + H(+) = a ubiquinol + n Na(+)(out) + NAD(+). In terms of biological role, NQR complex catalyzes the reduction of ubiquinone-1 to ubiquinol by two successive reactions, coupled with the transport of Na(+) ions from the cytoplasm to the periplasm. NqrA to NqrE are probably involved in the second step, the conversion of ubisemiquinone to ubiquinol. The sequence is that of Na(+)-translocating NADH-quinone reductase subunit D from Chlamydia trachomatis serovar L2 (strain ATCC VR-902B / DSM 19102 / 434/Bu).